The chain runs to 227 residues: MNLSFFDQFSSPCLLGIPLILPSLLLPALLLPSPGNRWINNRLSTIQLWFTHLITKQLMTPLNKAGHKWALLLTSLILMLLSINLLGLLPYTFTPTTQLSMNMALALPLWLATLLTGLRNQPSASLGHLLPEGTPTPLIPALIMIETTSLLIRPLALGVRLTANLTAGHLLIQLISTATIALLPMMPSISALTALILFLLTILEVAVAMIQAYVFVLLLSLYLQENI.

Helical transmembrane passes span 12 to 32, 69 to 89, 98 to 118, 139 to 159, 170 to 190, and 196 to 216; these read PCLL…LLLP, WALL…LGLL, QLSM…LTGL, IPAL…ALGV, LLIQ…PSIS, and ILFL…YVFV.

This sequence belongs to the ATPase A chain family. Component of the ATP synthase complex composed at least of ATP5F1A/subunit alpha, ATP5F1B/subunit beta, ATP5MC1/subunit c (homooctomer), MT-ATP6/subunit a, MT-ATP8/subunit 8, ATP5ME/subunit e, ATP5MF/subunit f, ATP5MG/subunit g, ATP5MK/subunit k, ATP5MJ/subunit j, ATP5F1C/subunit gamma, ATP5F1D/subunit delta, ATP5F1E/subunit epsilon, ATP5PF/subunit F6, ATP5PB/subunit b, ATP5PD/subunit d, ATP5PO/subunit OSCP. ATP synthase complex consists of a soluble F(1) head domain (subunits alpha(3) and beta(3)) - the catalytic core - and a membrane F(0) domain - the membrane proton channel (subunits c, a, 8, e, f, g, k and j). These two domains are linked by a central stalk (subunits gamma, delta, and epsilon) rotating inside the F1 region and a stationary peripheral stalk (subunits F6, b, d, and OSCP). Interacts with DNAJC30; interaction is direct.

It localises to the mitochondrion inner membrane. It catalyses the reaction H(+)(in) = H(+)(out). Functionally, subunit a, of the mitochondrial membrane ATP synthase complex (F(1)F(0) ATP synthase or Complex V) that produces ATP from ADP in the presence of a proton gradient across the membrane which is generated by electron transport complexes of the respiratory chain. ATP synthase complex consist of a soluble F(1) head domain - the catalytic core - and a membrane F(1) domain - the membrane proton channel. These two domains are linked by a central stalk rotating inside the F(1) region and a stationary peripheral stalk. During catalysis, ATP synthesis in the catalytic domain of F(1) is coupled via a rotary mechanism of the central stalk subunits to proton translocation. With the subunit c (ATP5MC1), forms the proton-conducting channel in the F(0) domain, that contains two crucial half-channels (inlet and outlet) that facilitate proton movement from the mitochondrial intermembrane space (IMS) into the matrix. Protons are taken up via the inlet half-channel and released through the outlet half-channel, following a Grotthuss mechanism. The chain is ATP synthase F(0) complex subunit a from Gallus gallus (Chicken).